A 203-amino-acid chain; its full sequence is Chaperonin-like RbcX protein 2, chloroplastic (203 aa).

The transit peptide at 1 to 78 (MVSAWFVVGS…RKSKKLLIVN (78 aa)) directs the protein to the chloroplast.

This sequence belongs to the RbcX family. In terms of assembly, homodimer. Interacts with rbcL, atpB and RBCS-1B.

It localises to the plastid. The protein localises to the chloroplast stroma. In terms of biological role, chaperone involved in RuBisCO assembly process. This is Chaperonin-like RbcX protein 2, chloroplastic from Arabidopsis thaliana (Mouse-ear cress).